The chain runs to 196 residues: Holliday junction branch migration complex subunit RuvA (196 aa).

The segment at 1–69 is domain I; that stretch reads MIVGLRGTII…EDAHLLFGFC (69 aa). The interval 70 to 148 is domain II; it reads EEIEKQTFER…QLLQSQEESI (79 aa). The flexible linker stretch occupies residues 149–157; it reads APSNNLKYE. Residues 157-196 are domain III; sequence EASLALQSLGFKRNEIQKVLEHIEALSVSEIVKEALKRLA.

It belongs to the RuvA family. Homotetramer. Forms an RuvA(8)-RuvB(12)-Holliday junction (HJ) complex. HJ DNA is sandwiched between 2 RuvA tetramers; dsDNA enters through RuvA and exits via RuvB. An RuvB hexamer assembles on each DNA strand where it exits the tetramer. Each RuvB hexamer is contacted by two RuvA subunits (via domain III) on 2 adjacent RuvB subunits; this complex drives branch migration. In the full resolvosome a probable DNA-RuvA(4)-RuvB(12)-RuvC(2) complex forms which resolves the HJ.

The protein resides in the cytoplasm. Its function is as follows. The RuvA-RuvB-RuvC complex processes Holliday junction (HJ) DNA during genetic recombination and DNA repair, while the RuvA-RuvB complex plays an important role in the rescue of blocked DNA replication forks via replication fork reversal (RFR). RuvA specifically binds to HJ cruciform DNA, conferring on it an open structure. The RuvB hexamer acts as an ATP-dependent pump, pulling dsDNA into and through the RuvAB complex. HJ branch migration allows RuvC to scan DNA until it finds its consensus sequence, where it cleaves and resolves the cruciform DNA. In Helicobacter hepaticus (strain ATCC 51449 / 3B1), this protein is Holliday junction branch migration complex subunit RuvA.